Reading from the N-terminus, the 119-residue chain is uncharacterized protein (119 aa).

This is an uncharacterized protein from Bacillus subtilis (strain 168).